A 71-amino-acid chain; its full sequence is Large ribosomal subunit protein bL31 (71 aa).

Zn(2+)-binding residues include Cys16, Cys18, Cys37, and Cys40.

It belongs to the bacterial ribosomal protein bL31 family. Type A subfamily. Part of the 50S ribosomal subunit. Zn(2+) is required as a cofactor.

Its function is as follows. Binds the 23S rRNA. In Solidesulfovibrio magneticus (strain ATCC 700980 / DSM 13731 / RS-1) (Desulfovibrio magneticus), this protein is Large ribosomal subunit protein bL31.